The sequence spans 260 residues: Circadian clock-controlled protein daywake (260 aa).

The N-terminal stretch at 1–25 (MQLTGASMFLVWVGLLSWVSCRVDA) is a signal peptide.

This sequence belongs to the TO family. In terms of tissue distribution, epidermis of newly eclosed adults.

Component of the circadian clock or downstream effector of clock function. Required for suppressing daytime sleep (siesta) under ambient environmental temperatures. Part of a heat avoidance mechanism that modulates daytime sleep behavior under different environmental temperatures to minimize the risk of heat exposure. Under cooler ambient temperatures, suppresses daytime sleep (siesta) and thus allows for longer periods of daytime activity. The sequence is that of Circadian clock-controlled protein daywake from Drosophila melanogaster (Fruit fly).